Consider the following 449-residue polypeptide: Jacalin-related lectin 20 (449 aa).

2 disordered regions span residues 1 to 20 (MAQRLEAKGGKGGNQWDDGA) and 294 to 314 (APPIPPPPPTEKLQGSGGDGG). At Ala-2 the chain carries N-acetylalanine. 3 Jacalin-type lectin domains span residues 2-144 (AQRL…YFTP), 147-294 (PIKQ…HFGA), and 303-446 (TEKL…TVAP).

Belongs to the jacalin lectin family.

This chain is Jacalin-related lectin 20 (JAL20), found in Arabidopsis thaliana (Mouse-ear cress).